The primary structure comprises 495 residues: 2-carboxy-D-arabinitol-1-phosphatase (495 aa).

Over residues 1–12 the composition is skewed to pro residues; sequence MLLFAPTPPPSP. The segment at 1–23 is disordered; the sequence is MLLFAPTPPPSPATAHRRPGGSA. The transit peptide at 1-50 directs the protein to the chloroplast; it reads MLLFAPTPPPSPATAHRRPGGSAASCIRCSSVRELDRSPSRPPLPPLAEA. His-58 serves as the catalytic Tele-phosphohistidine intermediate. Glu-132 serves as the catalytic Proton donor/acceptor.

The protein belongs to the phosphoglycerate mutase family.

The protein resides in the plastid. The protein localises to the chloroplast stroma. The catalysed reaction is 2-carboxy-D-arabinitol 1-phosphate + H2O = 2-carboxy-D-arabinitol + phosphate. Its activity is regulated as follows. Inactivated by oxidized glutathione (GSSG) at pH 8.0. Functionally, phosphoglycerate mutase-like protein lacking PGM activity, but having 2-carboxy-D-arabinitol 1-phosphate (CA1P) phosphatase activity. Can dephosphorylate the closely related compounds 2-carboxy-D-arabinitol 1,5-bisphosphate (CABP) and 2-carboxy-D-ribitol-1,5-bisphosphate(CRBP), and 2,3-diphosphoglycerate. Prevents the accumulation of D-glycero-2,3-pentodiulose-1,5-bisphosphate (PDBP) a potent inhibitor of ribulose-1,5-bisphosphate carboxylase (RuBisCO). PDBP is produced during the oxidation of ribulose-1,5-bisphosphate, the substrate of RuBisCO. This is 2-carboxy-D-arabinitol-1-phosphatase from Triticum aestivum (Wheat).